The sequence spans 338 residues: Oligopeptide transport ATP-binding protein OppD (338 aa).

In terms of domain architecture, ABC transporter spans 7–257; that stretch reads LEAKQVSVAF…PKHPYTRSLL (251 aa). 43 to 50 contributes to the ATP binding site; it reads GESGSGKS.

It belongs to the ABC transporter superfamily. As to quaternary structure, the complex is composed of two ATP-binding proteins (OppD and OppF), two transmembrane proteins (OppB and OppC) and a solute-binding protein (OppA).

It localises to the cell membrane. The enzyme catalyses a [peptide](out) + ATP + H2O = a [peptide](in) + ADP + phosphate + H(+). Part of the ABC transporter complex OppABCDF involved in the uptake of oligopeptides. Probably responsible for energy coupling to the transport system. Essential for uptake of peptides larger than three amino acids and for growth in milk. This chain is Oligopeptide transport ATP-binding protein OppD, found in Lactococcus lactis subsp. cremoris (strain SK11).